A 377-amino-acid polypeptide reads, in one-letter code: Sodium-dependent organic anion transporter (377 aa).

The Extracellular portion of the chain corresponds to 1-29 (MRANCSSGLACPANSSEEELPEGLKAFGN). An N-linked (GlcNAc...) asparagine glycan is attached at asparagine 4. The chain crosses the membrane as a helical span at residues 30–50 (LDLVFTVVSALMIGLLMFSLG). Residues 51–67 (CSVEVQKLWGHIRRPWG) are Cytoplasmic-facing. A helical membrane pass occupies residues 68–88 (IAVGMLCQFGLMPLIAYLLII). Residues 89–97 (SFSLKPLQA) are Extracellular-facing. The helical transmembrane segment at 98–118 (IAVLIMGCCPGGTVSNIFTFW) threads the bilayer. Residues 119-133 (VDGDMDLSISMTTCS) are Cytoplasmic-facing. A helical transmembrane segment spans residues 134–154 (TMAALGMMPLCLYLYTLSWNL). The Extracellular portion of the chain corresponds to 155-159 (EQNLT). Asparagine 157 carries N-linked (GlcNAc...) asparagine glycosylation. The helical transmembrane segment at 160-180 (IPYQNIGITLVCLIIPVAFGI) threads the bilayer. The Cytoplasmic portion of the chain corresponds to 181 to 195 (YVNYRWPKQSKIILK). The helical transmembrane segment at 196–216 (IGAIAGGLLFLVVTGAGMVLM) threads the bilayer. At 217-223 (KEFWSSD) the chain is on the extracellular side. Residues 224–244 (IILLMISFIFPLIGHATGFLL) form a helical membrane-spanning segment. The Cytoplasmic portion of the chain corresponds to 245 to 257 (ALLTHQSWQRCRT). A helical transmembrane segment spans residues 258–278 (ISLETGTQNVQMCFTMLQLSF). At 279–285 (TAEQLVQ) the chain is on the extracellular side. A helical membrane pass occupies residues 286–306 (IFGFVLAYGLFQMLNGFFMVA). Topologically, residues 307-377 (AYKMYKRRLK…TPTGDIARAK (71 aa)) are cytoplasmic. The segment at 319–377 (HGNEKPSCQEARHRKKSTSPKETTAFLEVNEEATLSPGPSGPVDPHGAPTPTGDIARAK) is disordered.

Belongs to the bile acid:sodium symporter (BASS) (TC 2.A.28) family. Post-translationally, glycosylated.

Its subcellular location is the membrane. It catalyses the reaction estrone 3-sulfate(out) + 2 Na(+)(out) = estrone 3-sulfate(in) + 2 Na(+)(in). The enzyme catalyses 17beta-estradiol 3-sulfate(out) + 2 Na(+)(out) = 17beta-estradiol 3-sulfate(in) + 2 Na(+)(in). The catalysed reaction is dehydroepiandrosterone 3-sulfate(out) + 2 Na(+)(out) = dehydroepiandrosterone 3-sulfate(in) + 2 Na(+)(in). It carries out the reaction androst-5-ene-diol 3-sulfate(out) + 2 Na(+)(out) = androst-5-ene-diol 3-sulfate(in) + 2 Na(+)(in). It catalyses the reaction pregnenolone sulfate(out) + 2 Na(+)(out) = pregnenolone sulfate(in) + 2 Na(+)(in). The enzyme catalyses taurolithocholate 3-sulfate(out) + 2 Na(+)(out) = taurolithocholate 3-sulfate(in) + 2 Na(+)(in). The catalysed reaction is androsterone 3alpha-sulfate(out) + 2 Na(+)(out) = androsterone 3alpha-sulfate(in) + 2 Na(+)(in). It carries out the reaction 5alpha-dihydrotestosterone sulfate(out) + 2 Na(+)(out) = 5alpha-dihydrotestosterone sulfate(in) + 2 Na(+)(in). It catalyses the reaction 17beta-estradiol 17-sulfate(out) + 2 Na(+)(out) = 17beta-estradiol 17-sulfate(in) + 2 Na(+)(in). The enzyme catalyses 17alpha-hydroxypregnenolone 3-sulfate(out) + 2 Na(+)(out) = 17alpha-hydroxypregnenolone 3-sulfate(in) + 2 Na(+)(in). The catalysed reaction is epiandrosterone 3-sulfate(out) + 2 Na(+)(out) = epiandrosterone 3-sulfate(in) + 2 Na(+)(in). It carries out the reaction epitestosterone 17-sulfate(out) + 2 Na(+)(out) = epitestosterone 17-sulfate(in) + 2 Na(+)(in). It catalyses the reaction testosterone 17-sulfate(out) + 2 Na(+)(out) = testosterone 17-sulfate(in) + 2 Na(+)(in). The enzyme catalyses 16alpha-hydroxydehydroepiandrosterone 3-sulfate(out) + 2 Na(+)(out) = 16alpha-hydroxydehydroepiandrosterone 3-sulfate(in) + 2 Na(+)(in). Transports sulfoconjugated steroid hormones from the extracellular compartment into the cytosol in a sodium-dependent manner without hydrolysis. Steroid sulfate hormones are commonly considered to be biologically inactive metabolites, that may be activated by steroid sulfatases into free steroids. May play an important role by delivering sulfoconjugated steroids to specific target cells in reproductive organs. May play a role transporting the estriol precursor 16alpha-hydroxydehydroepiandrosterone 3-sulfate (16a-OH-DHEAS) at the fetal blood vessel endothelium. Can also transport other sulfoconjugated molecules such as taurolithocholic acid-3-sulfate and sulfoconjugated pyrenes. The chain is Sodium-dependent organic anion transporter (SLC10A6) from Bos taurus (Bovine).